A 653-amino-acid polypeptide reads, in one-letter code: Serine/threonine-protein phosphatase with EF-hands 1 (653 aa).

An IQ domain is found at 16-45; that stretch reads SLRAALIIQNWYRGYKARLKARQHYALTIF. Residues 121 to 455 are catalytic; sequence IDLLLEAFKE…PRFFQYQVTK (335 aa). Residues aspartate 172, histidine 174, aspartate 201, and asparagine 233 each contribute to the Mn(2+) site. Catalysis depends on histidine 234, which acts as the Proton donor. The Mn(2+) site is built by histidine 285 and histidine 403. EF-hand domains lie at 483–518, 566–601, and 606–641; these read SRKS…ILGL, RYRS…FSSH, and IDDS…VHRY. Ca(2+) is bound by residues aspartate 579, aspartate 581, serine 583, glutamate 590, aspartate 619, asparagine 621, aspartate 623, serine 625, and glutamate 630.

The protein belongs to the PPP phosphatase family. Mn(2+) is required as a cofactor. It depends on Mg(2+) as a cofactor. In terms of tissue distribution, detected in retina and retinal derived Y-79 retinoblastoma cells. Also found in fetal brain.

The enzyme catalyses O-phospho-L-seryl-[protein] + H2O = L-seryl-[protein] + phosphate. The catalysed reaction is O-phospho-L-threonyl-[protein] + H2O = L-threonyl-[protein] + phosphate. Activated by calcium. Functionally, may have a role in the recovery or adaptation response of photoreceptors. May have a role in development. This is Serine/threonine-protein phosphatase with EF-hands 1 (PPEF1) from Homo sapiens (Human).